Consider the following 195-residue polypeptide: Capsid protein (195 aa).

Residues 148–195 are disordered; sequence NAPILSTLPETTVVRRRGRSPRRRTPSPRRRRSQSPRRRRSASPASQC. Residues 161–188 are compositionally biased toward basic residues; that stretch reads VRRRGRSPRRRTPSPRRRRSQSPRRRRS. A phosphoserine; by host mark is found at Ser167, Ser174, and Ser182. Residues 167–172 form a 1; half-length repeat; the sequence is SPRRRT. The segment at 167–188 is 3 X 7 AA repeats of S-P-R-R-R-[PR]-S; the sequence is SPRRRTPSPRRRRSQSPRRRRS. Residues 170 to 187 carry the Bipartite nuclear localization signal motif; the sequence is RRTPSPRRRRSQSPRRRR. 2 tandem repeats follow at residues 174–180 and 182–188. The tract at residues 189–195 is RNA binding; it reads ASPASQC.

The protein belongs to the orthohepadnavirus core antigen family. As to quaternary structure, homodimerizes, then multimerizes. Interacts with cytosol exposed regions of viral L glycoprotein present in the reticulum-to-Golgi compartment. Interacts with human FLNB. Phosphorylated form interacts with host importin alpha; this interaction depends on the exposure of the NLS, which itself depends upon genome maturation and/or phosphorylation of the capsid protein. Interacts with host NUP153. In terms of processing, phosphorylated by host SRPK1, SRPK2, and maybe protein kinase C or GAPDH. Phosphorylation is critical for pregenomic RNA packaging. Protein kinase C phosphorylation is stimulated by HBx protein and may play a role in transport of the viral genome to the nucleus at the late step during the viral replication cycle.

It is found in the virion. The protein localises to the host cytoplasm. Its function is as follows. Self assembles to form an icosahedral capsid. Most capsids appear to be large particles with an icosahedral symmetry of T=4 and consist of 240 copies of capsid protein, though a fraction forms smaller T=3 particles consisting of 180 capsid proteins. Entering capsids are transported along microtubules to the nucleus. Phosphorylation of the capsid is thought to induce exposure of nuclear localization signal in the C-terminal portion of the capsid protein that allows binding to the nuclear pore complex via the importin (karyopherin-) alpha and beta. Capsids are imported in intact form through the nuclear pore into the nuclear basket, where it probably binds NUP153. Only capsids that contain the mature viral genome can release the viral DNA and capsid protein into the nucleoplasm. Immature capsids get stuck in the basket. Capsids encapsulate the pre-genomic RNA and the P protein. Pre-genomic RNA is reverse-transcribed into DNA while the capsid is still in the cytoplasm. The capsid can then either be directed to the nucleus, providing more genomes for transcription, or bud through the endoplasmic reticulum to provide new virions. The chain is Capsid protein from Hepatitis B virus genotype G (isolate IG29227/2000) (HBV-G).